The sequence spans 416 residues: Serine hydroxymethyltransferase (416 aa).

Residues Leu-119 and Gly-123–Leu-125 each bind (6S)-5,6,7,8-tetrahydrofolate. Lys-228 bears the N6-(pyridoxal phosphate)lysine mark. Glu-243 is a binding site for (6S)-5,6,7,8-tetrahydrofolate.

It belongs to the SHMT family. As to quaternary structure, homodimer. It depends on pyridoxal 5'-phosphate as a cofactor.

It is found in the cytoplasm. The catalysed reaction is (6R)-5,10-methylene-5,6,7,8-tetrahydrofolate + glycine + H2O = (6S)-5,6,7,8-tetrahydrofolate + L-serine. It participates in one-carbon metabolism; tetrahydrofolate interconversion. Its pathway is amino-acid biosynthesis; glycine biosynthesis; glycine from L-serine: step 1/1. Functionally, catalyzes the reversible interconversion of serine and glycine with tetrahydrofolate (THF) serving as the one-carbon carrier. This reaction serves as the major source of one-carbon groups required for the biosynthesis of purines, thymidylate, methionine, and other important biomolecules. Also exhibits THF-independent aldolase activity toward beta-hydroxyamino acids, producing glycine and aldehydes, via a retro-aldol mechanism. The sequence is that of Serine hydroxymethyltransferase from Desulforapulum autotrophicum (strain ATCC 43914 / DSM 3382 / VKM B-1955 / HRM2) (Desulfobacterium autotrophicum).